Here is an 882-residue protein sequence, read N- to C-terminus: Alanine--tRNA ligase (882 aa).

Zn(2+)-binding residues include histidine 574, histidine 578, cysteine 682, and histidine 686. The tract at residues 853–882 is disordered; sequence GGRGGGKGALAQGGGLDPRKAREALPGLLP. A compositionally biased stretch (gly residues) spans 854-868; sequence GRGGGKGALAQGGGL.

Belongs to the class-II aminoacyl-tRNA synthetase family. It depends on Zn(2+) as a cofactor.

It is found in the cytoplasm. The enzyme catalyses tRNA(Ala) + L-alanine + ATP = L-alanyl-tRNA(Ala) + AMP + diphosphate. Its function is as follows. Catalyzes the attachment of alanine to tRNA(Ala) in a two-step reaction: alanine is first activated by ATP to form Ala-AMP and then transferred to the acceptor end of tRNA(Ala). Also edits incorrectly charged Ser-tRNA(Ala) and Gly-tRNA(Ala) via its editing domain. This is Alanine--tRNA ligase from Thermus thermophilus (strain ATCC BAA-163 / DSM 7039 / HB27).